The sequence spans 264 residues: 3-dehydroquinate dehydratase (264 aa).

Residues 50 to 52 (EWR) and Arg86 each bind 3-dehydroquinate. Residue His148 is the Proton donor/acceptor of the active site. Catalysis depends on Lys175, which acts as the Schiff-base intermediate with substrate. Positions 217, 236, and 240 each coordinate 3-dehydroquinate.

It belongs to the type-I 3-dehydroquinase family. In terms of assembly, homodimer.

The catalysed reaction is 3-dehydroquinate = 3-dehydroshikimate + H2O. Its pathway is metabolic intermediate biosynthesis; chorismate biosynthesis; chorismate from D-erythrose 4-phosphate and phosphoenolpyruvate: step 3/7. Functionally, involved in the third step of the chorismate pathway, which leads to the biosynthesis of aromatic amino acids. Catalyzes the cis-dehydration of 3-dehydroquinate (DHQ) and introduces the first double bond of the aromatic ring to yield 3-dehydroshikimate. This chain is 3-dehydroquinate dehydratase, found in Albidiferax ferrireducens (strain ATCC BAA-621 / DSM 15236 / T118) (Rhodoferax ferrireducens).